The following is a 71-amino-acid chain: Large ribosomal subunit protein bL31 (71 aa).

Zn(2+) is bound by residues Cys-16, Cys-18, Cys-36, and Cys-39.

It belongs to the bacterial ribosomal protein bL31 family. Type A subfamily. In terms of assembly, part of the 50S ribosomal subunit. It depends on Zn(2+) as a cofactor.

Binds the 23S rRNA. This is Large ribosomal subunit protein bL31 from Thermus thermophilus (strain ATCC BAA-163 / DSM 7039 / HB27).